The following is a 276-amino-acid chain: F420-dependent methylenetetrahydromethanopterin dehydrogenase (276 aa).

The protein belongs to the MTD family.

It catalyses the reaction 5,10-methylenetetrahydromethanopterin + oxidized coenzyme F420-(gamma-L-Glu)(n) + 2 H(+) = 5,10-methenyl-5,6,7,8-tetrahydromethanopterin + reduced coenzyme F420-(gamma-L-Glu)(n). Its function is as follows. Catalyzes the oxidation of methylene-H(4)MPT to methenyl-H(4)MPT(+). This is F420-dependent methylenetetrahydromethanopterin dehydrogenase from Methanosphaera stadtmanae (strain ATCC 43021 / DSM 3091 / JCM 11832 / MCB-3).